The sequence spans 194 residues: Putative 3-methyladenine DNA glycosylase (194 aa).

It belongs to the DNA glycosylase MPG family.

The protein is Putative 3-methyladenine DNA glycosylase of Synechococcus elongatus (strain ATCC 33912 / PCC 7942 / FACHB-805) (Anacystis nidulans R2).